A 60-amino-acid chain; its full sequence is LECNKLVPIAHKTCPAGKNLCYQMYMVSKSTIPVKRGCIDVCPKSSLLVKYVCCNTDRCN.

Disulfide bonds link Cys-3–Cys-21, Cys-14–Cys-38, Cys-42–Cys-53, and Cys-54–Cys-59.

The protein belongs to the three-finger toxin family. Short-chain subfamily. Type IA cytotoxin sub-subfamily. As to quaternary structure, monomer in solution; Homodimer and oligomer in the presence of negatively charged lipids forming a pore with a size ranging between 20 and 30 Angstroms. Expressed by the venom gland.

Its subcellular location is the secreted. It localises to the target cell membrane. Its function is as follows. Shows cytolytic activity on many different cells by forming pore in lipid membranes. In vivo, increases heart rate or kills the animal by cardiac arrest. In addition, it binds to heparin with high affinity, interacts with Kv channel-interacting protein 1 (KCNIP1) in a calcium-independent manner, and binds to integrin alpha-V/beta-3 (ITGAV/ITGB3) with moderate affinity. In Naja melanoleuca (Forest cobra), this protein is Cytotoxin 1.